Reading from the N-terminus, the 147-residue chain is Probable inactive ribonuclease-like protein 12 (147 aa).

Positions 1 to 20 are cleaved as a signal peptide; the sequence is MIIMVIIFLVLLFWENEVND.

This sequence belongs to the pancreatic ribonuclease family.

Its subcellular location is the secreted. In terms of biological role, does not exhibit any ribonuclease activity. This is Probable inactive ribonuclease-like protein 12 (RNASE12) from Homo sapiens (Human).